Here is a 764-residue protein sequence, read N- to C-terminus: MSSPRAAPSHDTFPNAKRRKVRKGTHSCWECKRRKMKCIFDPRITSTSCNGCRQRGSPCISQEFVQDDSHVAHGANDSASLDASTPIATPSDDARRADHDILTPVSVDSEPYRYLPSSKSSDKRFTTRSSNDASTCPMKHEKLSKYLHEALPSREDTERICKASRHSSILAHELLTVPYDTLYRNGLKTPDSLLAIPEPHVHPVLIAKHMLQLATFLQHLHPDLDKEIKVLSESPRAIMQRLVDIAIHHITTNNELLGSVESLECVMIESLYQANIGNLRKSWVAGRRAMSIAQLMGLHRSDSLSQYKVLDPKTEYNPQLMWLRIVTLDRHLCLLLGLPQGCTDRSMASETCLSNDTQMGRLERLHCVLMSRILERNEYSTNAQHAVVTREIDLELQKAARGLTSKWWLAPKLNTASADLQVHFWDTRRLLAQIFHYNLLIQLHLPYMLRVSSDESKHDYSRMTCVNASREVLSRYITLRNLNRIAYSCRTVDFIALMAAMALLLAHMNCHRAGAVNPLAHQYLSDRAMIEQVQENMHEINKLNSDALSAQSADLLKKLLAIEMEAGDTRVSVSEASNGVVQQDGTTREEDGVVSVQVPYFGIIRIGKDTPTKNQASVTATMHGTAPLHLDRFPTSINTNSDPVHVHSQADFPSSTQLSSSSHPNTPSPALSLNNIPFHATCMAALPDSSVVFTRQQHQKQQQEHQEFGGDLATVSDTSFPSSLHATWQDNFPELAAGSEDWAFQGVDMAFFESIMRSDTNLGQ.

Positions 28 to 59 form a DNA-binding region, zn(2)-C6 fungal-type; sequence CWECKRRKMKCIFDPRITSTSCNGCRQRGSPC. Disordered regions lie at residues 73-94, 112-136, and 633-672; these read HGAN…SDDA, YRYL…ASTC, and FPTS…PALS. Positions 77–88 are enriched in polar residues; sequence DSASLDASTPIA. A compositionally biased stretch (polar residues) spans 663–672; the sequence is HPNTPSPALS.

Its subcellular location is the nucleus. Functionally, transcription factor involved in regulation of the dehydrocurvularin biosynthesis gene cluster. This is Dehydrocurvularin biosynthesis regulator from Alternaria cinerariae.